Here is a 37-residue protein sequence, read N- to C-terminus: Large ribosomal subunit protein bL36 (37 aa).

Belongs to the bacterial ribosomal protein bL36 family.

The polypeptide is Large ribosomal subunit protein bL36 (Natranaerobius thermophilus (strain ATCC BAA-1301 / DSM 18059 / JW/NM-WN-LF)).